Here is a 379-residue protein sequence, read N- to C-terminus: Probable G-protein coupled receptor No18 (379 aa).

Over 5 to 36 the chain is Extracellular; it reads EASITGRTAPELNASAAPLDDERELGETVAAT. A glycan (N-linked (GlcNAc...) asparagine) is linked at N17. The helical transmembrane segment at 37–58 threads the bilayer; the sequence is ALLLAIILVTIVGNSLVIISVF. Residues 59 to 68 lie on the Cytoplasmic side of the membrane; the sequence is TYRPLRSVQN. Residues 69–90 traverse the membrane as a helical segment; sequence FFVVSLAVADLTVALFVLPLNV. Over 91-107 the chain is Extracellular; sequence AYRLLNQWLLGSYLCQM. C105 and C184 are oxidised to a cystine. Residues 108–128 traverse the membrane as a helical segment; that stretch reads WLTCDILCCTSSILNLCVIAL. The Cytoplasmic portion of the chain corresponds to 129–148; that stretch reads DRYWAITDPINYAQKRTIRR. Residues 149-171 traverse the membrane as a helical segment; sequence VNTMIAAVWALSLVISVPPLLGW. Topologically, residues 172-196 are extracellular; it reads NDWPAQFTEDTPCTLTQERLFVVYS. A helical transmembrane segment spans residues 197 to 218; it reads SSGSFFIPLIIMSVVYAKIFFA. The Cytoplasmic portion of the chain corresponds to 219–303; it reads TKRRLRERTR…LSKERKAARV (85 aa). A disordered region spans residues 234-276; sequence AVPAPPQRTSSRPLAELESVASQEDETEPSPEPEPLSSRADKP. A helical membrane pass occupies residues 304 to 325; the sequence is LGVIMGVFVVCWLPFFLMYAIV. At 326 to 340 the chain is on the extracellular side; it reads PFCTNCAPPSQRVVD. A helical transmembrane segment spans residues 341–362; sequence FVTWLGYVNSSLNPIIYTIYNK. Residues 363 to 375 are Cytoplasmic-facing; the sequence is DFRTAFSRLLRCD.

This sequence belongs to the G-protein coupled receptor 1 family.

It localises to the cell membrane. Functionally, probable G-protein coupled receptor for an amine. This is Probable G-protein coupled receptor No18 from Amphibalanus amphitrite (Striped barnacle).